Reading from the N-terminus, the 462-residue chain is MALQNEKNSRYLLRDWKPENPAFWENKGKHIARRNLWISVSCLLLAFCVWMLFSAVTVNLNKIGFNFTTDQLFLLTALPSVSGALLRVPYSFMVPIFGGRRWTVFSTAILIIPCVWLGIAVQNPNTPFGIFIVIALLCGFAGANFASSMGNISFFFPKAKQGSALGINGGLGNLGVSVMQLVAPLVIFVPVFAFLGVNGVPQADGSVMSLANAAWIWVPLLAIATIAAWSGMNDIASSRASIADQLPVLQRLHLWLLSLLYLATFGSFIGFSAGFAMLAKTQFPDVNILRLAFFGPFIGAIARSVGGAISDKFGGVRVTLINFIFMAIFSALLFLTLPGTGSGNFIAFYAVFMGLFLTAGLGSGSTFQMIAVIFRQITIYRVKMKGGSDEQAHKEAVTETAAALGFISAIGAVGGFFIPQAFGMSLNMTGSPVGAMKVFLIFYIVCVLLTWLVYGRRKFSQK.

Residues 1–35 (MALQNEKNSRYLLRDWKPENPAFWENKGKHIARRN) lie on the Cytoplasmic side of the membrane. The chain crosses the membrane as a helical span at residues 36–56 (LWISVSCLLLAFCVWMLFSAV). Topologically, residues 57–76 (TVNLNKIGFNFTTDQLFLLT) are periplasmic. A helical membrane pass occupies residues 77–97 (ALPSVSGALLRVPYSFMVPIF). Residues 98-101 (GGRR) lie on the Cytoplasmic side of the membrane. A helical transmembrane segment spans residues 102–122 (WTVFSTAILIIPCVWLGIAVQ). Topologically, residues 123 to 125 (NPN) are periplasmic. The helical transmembrane segment at 126–146 (TPFGIFIVIALLCGFAGANFA) threads the bilayer. Over 147–180 (SSMGNISFFFPKAKQGSALGINGGLGNLGVSVMQ) the chain is Cytoplasmic. A helical membrane pass occupies residues 181–201 (LVAPLVIFVPVFAFLGVNGVP). Residues 202–206 (QADGS) are Periplasmic-facing. A helical transmembrane segment spans residues 207 to 227 (VMSLANAAWIWVPLLAIATIA). Over 228-258 (AWSGMNDIASSRASIADQLPVLQRLHLWLLS) the chain is Cytoplasmic. The chain crosses the membrane as a helical span at residues 259–279 (LLYLATFGSFIGFSAGFAMLA). At 280–287 (KTQFPDVN) the chain is on the periplasmic side. A helical transmembrane segment spans residues 288-308 (ILRLAFFGPFIGAIARSVGGA). At 309-317 (ISDKFGGVR) the chain is on the cytoplasmic side. Residues 318-338 (VTLINFIFMAIFSALLFLTLP) traverse the membrane as a helical segment. Residues 339 to 344 (GTGSGN) lie on the Periplasmic side of the membrane. A helical membrane pass occupies residues 345–365 (FIAFYAVFMGLFLTAGLGSGS). At 366–401 (TFQMIAVIFRQITIYRVKMKGGSDEQAHKEAVTETA) the chain is on the cytoplasmic side. Residues 402–422 (AALGFISAIGAVGGFFIPQAF) form a helical membrane-spanning segment. The Periplasmic segment spans residues 423-432 (GMSLNMTGSP). The helical transmembrane segment at 433-453 (VGAMKVFLIFYIVCVLLTWLV) threads the bilayer. Residues 454–462 (YGRRKFSQK) are Cytoplasmic-facing.

This sequence belongs to the major facilitator superfamily. Nitrate/nitrite porter (TC 2.A.1.8) family.

Its subcellular location is the cell inner membrane. In terms of biological role, catalyzes nitrate uptake, nitrite uptake and nitrite export across the cytoplasmic membrane. May function as a nitrate/H(+) and nitrite/H(+) channel. Could confer a selective advantage during severe nutrient starvation or slow growth. This Escherichia coli (strain K12) protein is Nitrate/nitrite transporter NarU (narU).